We begin with the raw amino-acid sequence, 525 residues long: GMP synthase [glutamine-hydrolyzing] (525 aa).

The Glutamine amidotransferase type-1 domain maps to 9 to 207 (RILILDFGSQ…VRDICQCEAL (199 aa)). Cysteine 86 acts as the Nucleophile in catalysis. Active-site residues include histidine 181 and glutamate 183. The GMPS ATP-PPase domain occupies 208–400 (WTPAKIIDDA…LGLPYNMLYR (193 aa)). Residue 235–241 (SGGVDSS) coordinates ATP.

Homodimer.

The catalysed reaction is XMP + L-glutamine + ATP + H2O = GMP + L-glutamate + AMP + diphosphate + 2 H(+). Its pathway is purine metabolism; GMP biosynthesis; GMP from XMP (L-Gln route): step 1/1. In terms of biological role, catalyzes the synthesis of GMP from XMP. The sequence is that of GMP synthase [glutamine-hydrolyzing] from Pectobacterium carotovorum subsp. carotovorum (strain PC1).